Reading from the N-terminus, the 212-residue chain is Nascent polypeptide-associated complex subunit alpha-like protein 4 (212 aa).

Residues 25 to 35 show a composition bias toward basic and acidic residues; sequence QKENDVVVEDV. The disordered stretch occupies residues 25–74; that stretch reads QKENDVVVEDVKDGDEDDDDVDDDDDEIADGAGENEASKQSRSEKKSRKA. The segment covering 36–53 has biased composition (acidic residues); it reads KDGDEDDDDVDDDDDEIA. Positions 65–130 constitute an NAC-A/B domain; sequence SRSEKKSRKA…AKIDDMSSQL (66 aa). Residues 173–210 form the UBA domain; it reads VEAKDIDLVMTQAGVSRPKAVKALKESNGDIVSAIMEL.

The protein belongs to the NAC-alpha family.

Its function is as follows. May promote appropriate targeting of ribosome-nascent polypeptide complexes. The polypeptide is Nascent polypeptide-associated complex subunit alpha-like protein 4 (Arabidopsis thaliana (Mouse-ear cress)).